A 466-amino-acid polypeptide reads, in one-letter code: 3-isopropylmalate dehydratase large subunit (466 aa).

Residues C347, C407, and C410 each coordinate [4Fe-4S] cluster.

The protein belongs to the aconitase/IPM isomerase family. LeuC type 1 subfamily. In terms of assembly, heterodimer of LeuC and LeuD. The cofactor is [4Fe-4S] cluster.

The enzyme catalyses (2R,3S)-3-isopropylmalate = (2S)-2-isopropylmalate. Its pathway is amino-acid biosynthesis; L-leucine biosynthesis; L-leucine from 3-methyl-2-oxobutanoate: step 2/4. Its function is as follows. Catalyzes the isomerization between 2-isopropylmalate and 3-isopropylmalate, via the formation of 2-isopropylmaleate. In Shewanella sediminis (strain HAW-EB3), this protein is 3-isopropylmalate dehydratase large subunit.